Here is a 423-residue protein sequence, read N- to C-terminus: Carboxypeptidase B2 (423 aa).

The signal sequence occupies residues 1–22 (MKLYSLGVLVATVLFCGEHAFA). A propeptide spans 23–114 (FQRGQVLSAL…QTSNDTISPR (92 aa)) (activation peptide). N-linked (GlcNAc...) asparagine glycosylation is found at Asn44, Asn73, Asn85, and Asn108. Residues 122–419 (QYHSLNEIYS…VAVAKIASHV (298 aa)) form the Peptidase M14 domain. Cys178 and Cys191 are oxidised to a cystine. Positions 181 and 184 each coordinate Zn(2+). Substrate-binding positions include 181 to 184 (HARE) and Arg239. Asn241 is a glycosylation site (N-linked (GlcNAc...) asparagine). Intrachain disulfides connect Cys250–Cys274 and Cys265–Cys279. 256 to 257 (NR) is a substrate binding site. His310 contacts Zn(2+). Substrate contacts are provided by residues 311-312 (SY) and Tyr363. The active-site Proton donor/acceptor is the Glu385.

It belongs to the peptidase M14 family. It depends on Zn(2+) as a cofactor.

It is found in the secreted. It carries out the reaction Release of C-terminal Arg and Lys from a polypeptide.. With respect to regulation, TAFI/CPB2 is unique among carboxypeptidases in that it spontaneously inactivates with a short half-life, a property that is crucial for its role in controlling blood clot lysis. The zymogen is stabilized by interactions with the activation peptide. Release of the activation peptide increases a dynamic flap mobility and in time this leads to conformational changes that disrupt the catalytic site and expose a cryptic thrombin-cleavage site present at Arg-324. Its function is as follows. Cleaves C-terminal arginine or lysine residues from biologically active peptides such as kinins or anaphylatoxins in the circulation thereby regulating their activities. Down-regulates fibrinolysis by removing C-terminal lysine residues from fibrin that has already been partially degraded by plasmin. This is Carboxypeptidase B2 (CPB2) from Bos taurus (Bovine).